The sequence spans 216 residues: Adenylate kinase (216 aa).

Residue 13–18 (GAGKGT) participates in ATP binding. Residues 33 to 66 (TTGDALRANKTKDITHLDVEYDTPGAYMDAGELV) form an NMP region. Residues T34, R39, 64-66 (ELV), 89-92 (GYPR), and Q96 contribute to the AMP site. An LID region spans residues 125–162 (GRRVCEDCGATFHVSFNQPETEGVCDACGGSLYQREDD). Residue R126 participates in ATP binding. Positions 129 and 132 each coordinate Zn(2+). Residue 135 to 136 (TF) participates in ATP binding. 2 residues coordinate Zn(2+): C149 and C152. AMP is bound by residues R159 and R170. Residue R198 coordinates ATP.

This sequence belongs to the adenylate kinase family. Monomer.

The protein localises to the cytoplasm. The catalysed reaction is AMP + ATP = 2 ADP. Its pathway is purine metabolism; AMP biosynthesis via salvage pathway; AMP from ADP: step 1/1. Functionally, catalyzes the reversible transfer of the terminal phosphate group between ATP and AMP. Plays an important role in cellular energy homeostasis and in adenine nucleotide metabolism. The polypeptide is Adenylate kinase (Halobacterium salinarum (strain ATCC 700922 / JCM 11081 / NRC-1) (Halobacterium halobium)).